Reading from the N-terminus, the 280-residue chain is Eukaryotic translation initiation factor 3 subunit F-1 (280 aa).

Positions 8-138 constitute an MPN domain; sequence VRVHPVVLFQ…LRAYVCIQLG (131 aa).

The protein belongs to the eIF-3 subunit F family. As to quaternary structure, component of the eukaryotic translation initiation factor 3 (eIF-3) complex. The eIF-3 complex interacts with pix.

The protein resides in the cytoplasm. In terms of biological role, component of the eukaryotic translation initiation factor 3 (eIF-3) complex, which is involved in protein synthesis of a specialized repertoire of mRNAs and, together with other initiation factors, stimulates binding of mRNA and methionyl-tRNAi to the 40S ribosome. The eIF-3 complex specifically targets and initiates translation of a subset of mRNAs involved in cell proliferation. The sequence is that of Eukaryotic translation initiation factor 3 subunit F-1 from Drosophila willistoni (Fruit fly).